The sequence spans 213 residues: Thymidylate kinase (213 aa).

10–17 (GLEGAGKT) lines the ATP pocket.

Belongs to the thymidylate kinase family.

The enzyme catalyses dTMP + ATP = dTDP + ADP. In terms of biological role, phosphorylation of dTMP to form dTDP in both de novo and salvage pathways of dTTP synthesis. The polypeptide is Thymidylate kinase (Escherichia coli O6:K15:H31 (strain 536 / UPEC)).